The primary structure comprises 398 residues: 1-deoxy-D-xylulose 5-phosphate reductoisomerase (398 aa).

NADPH contacts are provided by Thr10, Gly11, Ser12, Ile13, Lys37, Asn38, and Asn124. Lys125 contacts 1-deoxy-D-xylulose 5-phosphate. Glu126 is an NADPH binding site. Asp150 serves as a coordination point for Mn(2+). Ser151, Glu152, Ser186, and His209 together coordinate 1-deoxy-D-xylulose 5-phosphate. Mn(2+) is bound at residue Glu152. Gly215 is a binding site for NADPH. Ser222, Asn227, Lys228, and Glu231 together coordinate 1-deoxy-D-xylulose 5-phosphate. Glu231 lines the Mn(2+) pocket.

Belongs to the DXR family. In terms of assembly, homodimer. It depends on Mg(2+) as a cofactor. Mn(2+) is required as a cofactor.

The catalysed reaction is 2-C-methyl-D-erythritol 4-phosphate + NADP(+) = 1-deoxy-D-xylulose 5-phosphate + NADPH + H(+). It functions in the pathway isoprenoid biosynthesis; isopentenyl diphosphate biosynthesis via DXP pathway; isopentenyl diphosphate from 1-deoxy-D-xylulose 5-phosphate: step 1/6. Catalyzes the NADPH-dependent rearrangement and reduction of 1-deoxy-D-xylulose-5-phosphate (DXP) to 2-C-methyl-D-erythritol 4-phosphate (MEP). The polypeptide is 1-deoxy-D-xylulose 5-phosphate reductoisomerase (Buchnera aphidicola subsp. Acyrthosiphon pisum (strain 5A)).